A 145-amino-acid polypeptide reads, in one-letter code: Methyl-coenzyme M reductase I operon protein D (145 aa).

In terms of assembly, MCR is composed of three subunits: alpha, beta, and gamma. The function of proteins C and D is not known.

This is Methyl-coenzyme M reductase I operon protein D (mcrD) from Methanothermobacter marburgensis (strain ATCC BAA-927 / DSM 2133 / JCM 14651 / NBRC 100331 / OCM 82 / Marburg) (Methanobacterium thermoautotrophicum).